We begin with the raw amino-acid sequence, 715 residues long: Probable phospholipase YOR022C, mitochondrial (715 aa).

The N-terminal 22 residues, 1-22, are a transit peptide targeting the mitochondrion; the sequence is MLRFTHRGLPSSTRFRNIFVRL. Disordered stretches follow at residues 161 to 180, 242 to 268, and 311 to 340; these read YPVDKENEGEQKNGSSNKDE, TSTSFKAAKTPQTEVADGSNSSKSRSI, and YNNADNSQGANASSKIEDGKNSGASDRQIR. Low complexity predominate over residues 242–251; the sequence is TSTSFKAAKT. Residues 311–324 are compositionally biased toward polar residues; it reads YNNADNSQGANASS. Serine 501 is a catalytic residue. Residues 519–700 form the DDHD domain; that stretch reads LEFQVDNLFF…AAFILKEILS (182 aa).

Belongs to the PA-PLA1 family.

The protein resides in the mitochondrion. Its function is as follows. Probable phospholipase that hydrolyzes phosphatidic acid. The protein is Probable phospholipase YOR022C, mitochondrial of Saccharomyces cerevisiae (strain ATCC 204508 / S288c) (Baker's yeast).